The following is an 889-amino-acid chain: Heat shock protein 70 homolog LHS1 (889 aa).

The signal sequence occupies residues 1–15; the sequence is MKLSILFLFAIAVQA. N-linked (GlcNAc...) asparagine glycosylation is found at Asn111, Asn366, Asn462, Asn502, Asn515, Asn716, and Asn752. Positions 811–889 are disordered; it reads IKKQEKQNEN…SAGNVFDDEL (79 aa). 2 stretches are compositionally biased toward acidic residues: residues 820–833 and 868–889; these read NEENGDDEGDDEDE and DEEDEEEEEDDSSAGNVFDDEL. The short motif at 886–889 is the Prevents secretion from ER element; the sequence is DDEL.

This sequence belongs to the heat shock protein 70 family.

Its subcellular location is the endoplasmic reticulum lumen. It carries out the reaction ATP + H2O = ADP + phosphate + H(+). Its function is as follows. Chaperone required for protein translocation and folding in the endoplasmic reticulum. The protein is Heat shock protein 70 homolog LHS1 (LHS1) of Candida glabrata (strain ATCC 2001 / BCRC 20586 / JCM 3761 / NBRC 0622 / NRRL Y-65 / CBS 138) (Yeast).